We begin with the raw amino-acid sequence, 255 residues long: Shieldin complex subunit 3 (255 aa).

Residues 33–88 (QDFPTHPLPRFIPWFPYDESKLPLKPERLPPVISEEAAESVKQYLAISEPGVKSQS) are sufficient for interaction with MAD2L2. Positions 116–135 (QTNAAHLDKNSGKEKQHKQR) are disordered.

Component of the shieldin complex, consisting of SHLD1, SHLD2, SHLD3 and MAD2L2/REV7. Within the complex, SHLD2 forms a scaffold which interacts with a SHLD3-MAD2L2 subcomplex via its N-terminus, and with SHLD1 via its C-terminus. Interacts with ASTE1.

The protein localises to the chromosome. In terms of biological role, component of the shieldin complex, which plays an important role in repair of DNA double-stranded breaks (DSBs). During G1 and S phase of the cell cycle, the complex functions downstream of TP53BP1 to promote non-homologous end joining (NHEJ) and suppress DNA end resection. Mediates various NHEJ-dependent processes including immunoglobulin class-switch recombination, and fusion of unprotected telomeres. This chain is Shieldin complex subunit 3, found in Mus musculus (Mouse).